A 251-amino-acid chain; its full sequence is 2,3-bisphosphoglycerate-dependent phosphoglycerate mutase (251 aa).

Substrate-binding positions include 13-20, 26-27, Arg65, 92-95, Lys103, 119-120, and 186-187; these read RHGESEWN, TG, ERHY, RR, and GN. His14 serves as the catalytic Tele-phosphohistidine intermediate. Residue Glu92 is the Proton donor/acceptor of the active site.

Belongs to the phosphoglycerate mutase family. BPG-dependent PGAM subfamily.

The enzyme catalyses (2R)-2-phosphoglycerate = (2R)-3-phosphoglycerate. The protein operates within carbohydrate degradation; glycolysis; pyruvate from D-glyceraldehyde 3-phosphate: step 3/5. Functionally, catalyzes the interconversion of 2-phosphoglycerate and 3-phosphoglycerate. This chain is 2,3-bisphosphoglycerate-dependent phosphoglycerate mutase, found in Rhodococcus opacus (strain B4).